We begin with the raw amino-acid sequence, 461 residues long: Transcription factor GTE3, chloroplastic (461 aa).

Residues 1-11 (MASGPIAGGGV) show a composition bias toward gly residues. Residues 1 to 41 (MASGPIAGGGVSKTKHKWSDSGNKSQKRSKPTVANSNSLGL) form a disordered region. The transit peptide at 1–51 (MASGPIAGGGVSKTKHKWSDSGNKSQKRSKPTVANSNSLGLEDNHQMMKIS) directs the protein to the chloroplast. Positions 114-220 (KGTVQILKSC…NLFEEKWVPL (107 aa)) constitute a Bromo domain. One can recognise an NET domain in the interval 298-379 (LVEEASANRD…EYKESLSKKK (82 aa)). Residues 376–392 (SKKKEEQGLDSERDAES) are compositionally biased toward basic and acidic residues. Residues 376 to 461 (SKKKEEQGLD…SSGHESDTGN (86 aa)) are disordered. A compositionally biased stretch (polar residues) spans 393–412 (FHNSVHESNTLVTGLESSKV). Residues 429-451 (GGSSSSNSSSSGSGSGSSGSDSD) show a composition bias toward low complexity. The segment covering 452–461 (SSGHESDTGN) has biased composition (basic and acidic residues).

Interacts with SIZ1 (via PHD domain). In terms of processing, sumoylated by SIZ1. Sumoylation reduces capacity to bind to acetylated histone H3.

Its subcellular location is the plastid. It localises to the chloroplast. Its function is as follows. Probable transcription factor that binds to acetylated histone H3. This is Transcription factor GTE3, chloroplastic (GTE3) from Arabidopsis thaliana (Mouse-ear cress).